The sequence spans 100 residues: NAD(P)H-quinone oxidoreductase subunit 4L, chloroplastic (100 aa).

3 consecutive transmembrane segments (helical) span residues 1–21 (MLEHVLVLSAYLFSVGLYGLI), 31–51 (ICLELIFNAVNINFVTFSDFF), and 60–80 (IFAIFVIAIAAAEAAIGLAIL).

Belongs to the complex I subunit 4L family. In terms of assembly, NDH is composed of at least 16 different subunits, 5 of which are encoded in the nucleus.

Its subcellular location is the plastid. It localises to the chloroplast thylakoid membrane. It catalyses the reaction a plastoquinone + NADH + (n+1) H(+)(in) = a plastoquinol + NAD(+) + n H(+)(out). The enzyme catalyses a plastoquinone + NADPH + (n+1) H(+)(in) = a plastoquinol + NADP(+) + n H(+)(out). Its function is as follows. NDH shuttles electrons from NAD(P)H:plastoquinone, via FMN and iron-sulfur (Fe-S) centers, to quinones in the photosynthetic chain and possibly in a chloroplast respiratory chain. The immediate electron acceptor for the enzyme in this species is believed to be plastoquinone. Couples the redox reaction to proton translocation, and thus conserves the redox energy in a proton gradient. In Trachelium caeruleum (Blue throatwort), this protein is NAD(P)H-quinone oxidoreductase subunit 4L, chloroplastic.